The chain runs to 308 residues: MSFTRQEPPRPVIAVVGPTGSGKSDLGVNLALALDGEVINADALQFYRGMDIGTAKITVEERRGVPHHLLDSMDVTQEASVADFQDECRAAINDIHSRGKRAILVGGSGLYVRAALDVLEFPGTDPTLRKELEEECENNGLAPLRARLEEVDPVSAARLGDARRVIRALEVHGLTGRPFSSFMPQREYFQPALQIGLEVDREQLRERLAVRVHRMVEGGLQQEVERLDAVGLRSGKTASRALGYAQFLKVLDGEMTADTAAEETIVATRQFARRQLTWFRADPRITWLGWQDPELVDKAVKVVNAAST.

17 to 24 (GPTGSGKS) is an ATP binding site. 19–24 (TGSGKS) contributes to the substrate binding site.

Belongs to the IPP transferase family. In terms of assembly, monomer. Mg(2+) serves as cofactor.

The enzyme catalyses adenosine(37) in tRNA + dimethylallyl diphosphate = N(6)-dimethylallyladenosine(37) in tRNA + diphosphate. Functionally, catalyzes the transfer of a dimethylallyl group onto the adenine at position 37 in tRNAs that read codons beginning with uridine, leading to the formation of N6-(dimethylallyl)adenosine (i(6)A). This Paenarthrobacter aurescens (strain TC1) protein is tRNA dimethylallyltransferase.